The sequence spans 459 residues: F-box protein At1g47340 (459 aa).

In terms of domain architecture, F-box spans 31 to 76 (FMVSVSLPKELILEILKRLPAKSVKRFHCVSKQWASMLSCPHFREL). The interval 434-459 (AKIEWEEEEEEDEDEDQEKEEEDQWS) is disordered. Over residues 438–459 (WEEEEEEDEDEDQEKEEEDQWS) the composition is skewed to acidic residues.

The chain is F-box protein At1g47340 from Arabidopsis thaliana (Mouse-ear cress).